Here is a 293-residue protein sequence, read N- to C-terminus: Ribosomal protein L11 methyltransferase (293 aa).

S-adenosyl-L-methionine is bound by residues Thr145, Gly166, Asp188, and Asn230.

The protein belongs to the methyltransferase superfamily. PrmA family.

The protein resides in the cytoplasm. The catalysed reaction is L-lysyl-[protein] + 3 S-adenosyl-L-methionine = N(6),N(6),N(6)-trimethyl-L-lysyl-[protein] + 3 S-adenosyl-L-homocysteine + 3 H(+). Methylates ribosomal protein L11. The protein is Ribosomal protein L11 methyltransferase of Shewanella baltica (strain OS185).